Consider the following 655-residue polypeptide: Acetyl-coenzyme A synthetase (655 aa).

CoA contacts are provided by residues R196–R199 and T316. ATP is bound by residues G392–P394, D416–T421, D508, and R523. S531 is a CoA binding site. ATP is bound at residue R534. Mg(2+)-binding residues include V545, H547, and V550. K620 carries the post-translational modification N6-acetyllysine.

This sequence belongs to the ATP-dependent AMP-binding enzyme family. It depends on Mg(2+) as a cofactor. Post-translationally, acetylated. Deacetylation by the SIR2-homolog deacetylase activates the enzyme.

The enzyme catalyses acetate + ATP + CoA = acetyl-CoA + AMP + diphosphate. Catalyzes the conversion of acetate into acetyl-CoA (AcCoA), an essential intermediate at the junction of anabolic and catabolic pathways. AcsA undergoes a two-step reaction. In the first half reaction, AcsA combines acetate with ATP to form acetyl-adenylate (AcAMP) intermediate. In the second half reaction, it can then transfer the acetyl group from AcAMP to the sulfhydryl group of CoA, forming the product AcCoA. The chain is Acetyl-coenzyme A synthetase from Nitrosomonas europaea (strain ATCC 19718 / CIP 103999 / KCTC 2705 / NBRC 14298).